A 1164-amino-acid polypeptide reads, in one-letter code: Auxin response factor 7 (1164 aa).

The segment at residues Phe-127–Asn-229 is a DNA-binding region (TF-B3). 5 disordered regions span residues His-451–Leu-505, Gln-536–Gln-555, His-570–Gln-728, Phe-765–Gly-858, and Lys-903–Asn-930. Polar residues predominate over residues Leu-464–Met-489. Over residues His-570 to Gln-635 the composition is skewed to low complexity. Positions Gln-637–Pro-651 are enriched in polar residues. Positions Ser-652–Gln-671 are enriched in low complexity. Over residues Ala-678–Glu-710 the composition is skewed to polar residues. 2 stretches are compositionally biased toward low complexity: residues Gln-711–Gln-728 and Phe-765–Gln-790. The segment covering Gly-791–Pro-808 has biased composition (polar residues). A compositionally biased stretch (low complexity) spans Pro-841–Asn-851. The span at Lys-903 to Ser-921 shows a compositional bias: polar residues. A PB1 domain is found at Arg-1037–Asn-1130. The segment at Asp-1145–Arg-1164 is disordered.

This sequence belongs to the ARF family. In terms of assembly, homodimers and heterodimers. Interacts with the auxin-responsive proteins IAA1 and IAA12 (BODENLOS). Interacts (via PB1 domain) with IAA17 (via PB1 domain). Interacts with IAA19. Interacts with ARF5. Binds to JMJ30. Binds to ATXR2 in the nucleus. As to expression, expressed in the whole plant.

The protein localises to the nucleus. Functionally, auxin response factors (ARFs) are transcriptional factors that bind specifically to the DNA sequence 5'-TGTCTC-3' found in the auxin-responsive promoter elements (AuxREs). Acts as a transcriptional activator of several tropic stimulus-induced (TSI) genes, including SAUR50. Formation of heterodimers with Aux/IAA proteins may alter their ability to modulate early auxin response genes expression. Required for differential growth responses of aerial tissues. Involved in ethylene responses. Regulates lateral root formation through direct regulation of LBD16 and/or LBD29. Functionally redundant with ARF19. Mediates embryo axis formation and vascular tissues differentiation. Functionally redundant with ARF5. Involved in cellular dedifferentiation during callus formation on callus-inducing medium (CIM) and in an ATXR2-dependent manner. This Arabidopsis thaliana (Mouse-ear cress) protein is Auxin response factor 7.